A 602-amino-acid chain; its full sequence is Elongation factor 4 (602 aa).

Residues 7–188 enclose the tr-type G domain; it reads ENIRNFSIIA…SIIRLVPPPK (182 aa). GTP-binding positions include 19-24 and 135-138; these read DHGKST and NKID.

This sequence belongs to the TRAFAC class translation factor GTPase superfamily. Classic translation factor GTPase family. LepA subfamily.

Its subcellular location is the cell inner membrane. The enzyme catalyses GTP + H2O = GDP + phosphate + H(+). Its function is as follows. Required for accurate and efficient protein synthesis under certain stress conditions. May act as a fidelity factor of the translation reaction, by catalyzing a one-codon backward translocation of tRNAs on improperly translocated ribosomes. Back-translocation proceeds from a post-translocation (POST) complex to a pre-translocation (PRE) complex, thus giving elongation factor G a second chance to translocate the tRNAs correctly. Binds to ribosomes in a GTP-dependent manner. This is Elongation factor 4 from Chlamydia muridarum (strain MoPn / Nigg).